A 382-amino-acid polypeptide reads, in one-letter code: Mannitol-1-phosphate 5-dehydrogenase (382 aa).

3–14 serves as a coordination point for NAD(+); sequence ALHFGAGNIGRG.

This sequence belongs to the mannitol dehydrogenase family.

It catalyses the reaction D-mannitol 1-phosphate + NAD(+) = beta-D-fructose 6-phosphate + NADH + H(+). This Cronobacter sakazakii (strain ATCC BAA-894) (Enterobacter sakazakii) protein is Mannitol-1-phosphate 5-dehydrogenase.